The following is a 425-amino-acid chain: Succinate--CoA ligase [ADP-forming] subunit beta, mitochondrial (425 aa).

Residues 1–14 constitute a mitochondrion transit peptide; it reads NNHGLQIQQQQQRN. Positions 23 to 250 constitute an ATP-grasp domain; it reads MELLQEAGVS…SNSAYRQKKI (228 aa). K40 carries the post-translational modification N6-acetyllysine. Y46 is subject to Phosphotyrosine. K50 is modified (N6-acetyllysine; alternate). The residue at position 50 (K50) is an N6-succinyllysine; alternate. Residues K60 and 67–69 each bind ATP; that span reads GRG. N6-acetyllysine is present on residues K91, K101, K105, and K178. Mg(2+) contacts are provided by N220 and D234. Residue S241 is modified to Phosphoserine. Substrate is bound at residue N285. T303 carries the phosphothreonine modification. N6-acetyllysine is present on K330. Substrate is bound at residue 342–344; it reads GIM. The residue at position 400 (K400) is an N6-acetyllysine.

It belongs to the succinate/malate CoA ligase beta subunit family. ATP-specific subunit beta subfamily. Heterodimer of an alpha and a beta subunit. The beta subunit determines specificity for ATP. Interacts with ALAS2. Mg(2+) serves as cofactor.

It is found in the mitochondrion. The catalysed reaction is succinate + ATP + CoA = succinyl-CoA + ADP + phosphate. It participates in carbohydrate metabolism; tricarboxylic acid cycle; succinate from succinyl-CoA (ligase route): step 1/1. Functionally, ATP-specific succinyl-CoA synthetase functions in the citric acid cycle (TCA), coupling the hydrolysis of succinyl-CoA to the synthesis of ATP and thus represents the only step of substrate-level phosphorylation in the TCA. The beta subunit provides nucleotide specificity of the enzyme and binds the substrate succinate, while the binding sites for coenzyme A and phosphate are found in the alpha subunit. The protein is Succinate--CoA ligase [ADP-forming] subunit beta, mitochondrial of Sus scrofa (Pig).